Reading from the N-terminus, the 252-residue chain is Chitooligosaccharide deacetylase (252 aa).

Residues His61 and His125 each contribute to the Mg(2+) site.

Belongs to the YdjC deacetylase family. ChbG subfamily. In terms of assembly, homodimer. Mg(2+) is required as a cofactor.

The protein localises to the cytoplasm. The enzyme catalyses N,N'-diacetylchitobiose + H2O = N-acetyl-beta-D-glucosaminyl-(1-&gt;4)-D-glucosamine + acetate. It catalyses the reaction diacetylchitobiose-6'-phosphate + H2O = N'-monoacetylchitobiose-6'-phosphate + acetate. Its pathway is glycan degradation; chitin degradation. Involved in the degradation of chitin. ChbG is essential for growth on the acetylated chitooligosaccharides chitobiose and chitotriose but is dispensable for growth on cellobiose and chitosan dimer, the deacetylated form of chitobiose. Deacetylation of chitobiose-6-P and chitotriose-6-P is necessary for both the activation of the chb promoter by the regulatory protein ChbR and the hydrolysis of phosphorylated beta-glucosides by the phospho-beta-glucosidase ChbF. Catalyzes the removal of only one acetyl group from chitobiose-6-P to yield monoacetylchitobiose-6-P, the inducer of ChbR and the substrate of ChbF. In Klebsiella pneumoniae (strain 342), this protein is Chitooligosaccharide deacetylase.